The following is a 505-amino-acid chain: Apolipoprotein N-acyltransferase (505 aa).

The next 6 membrane-spanning stretches (helical) occupy residues 23–43 (LLAL…AVLY), 58–78 (GWWF…VSMN), 85–105 (PLLA…FFAL), 125–145 (LCFA…LTGF), 162–182 (LAPL…AALL), and 192–212 (PSFL…GLAL). Residues 230 to 469 (IQGNVEQDLK…QAVLYGEVVP (240 aa)) enclose the CN hydrolase domain. Glu-269 acts as the Proton acceptor in catalysis. Lys-329 is a catalytic residue. Residue Cys-381 is the Nucleophile of the active site. A helical membrane pass occupies residues 482–502 (WPLAIVCALLLGWALLAGRIA).

This sequence belongs to the CN hydrolase family. Apolipoprotein N-acyltransferase subfamily.

The protein resides in the cell inner membrane. The enzyme catalyses N-terminal S-1,2-diacyl-sn-glyceryl-L-cysteinyl-[lipoprotein] + a glycerophospholipid = N-acyl-S-1,2-diacyl-sn-glyceryl-L-cysteinyl-[lipoprotein] + a 2-acyl-sn-glycero-3-phospholipid + H(+). The protein operates within protein modification; lipoprotein biosynthesis (N-acyl transfer). In terms of biological role, catalyzes the phospholipid dependent N-acylation of the N-terminal cysteine of apolipoprotein, the last step in lipoprotein maturation. The protein is Apolipoprotein N-acyltransferase of Pseudomonas putida (strain ATCC 47054 / DSM 6125 / CFBP 8728 / NCIMB 11950 / KT2440).